The primary structure comprises 1461 residues: DNA topoisomerase 2 (1461 aa).

Over residues 1 to 17 (MSESESDYFTDGSEDDF) the composition is skewed to acidic residues. Residues 1–61 (MSESESDYFT…TPKPTNASET (61 aa)) are disordered. Residues 41–52 (TNSTVSSSRSST) show a composition bias toward low complexity. Residues N120, N149, 177-179 (SSN), and 190-197 (GRNGFGAK) each bind ATP. Residues 382 to 389 (SKKEKGKK) are interaction with DNA. ATP is bound at residue 418–420 (QTK). A Toprim domain is found at 498–614 (CTLILTEGLS…GLLDIPGFLL (117 aa)). Residues E504, D583, and D585 each contribute to the Mg(2+) site. The Topo IIA-type catalytic domain maps to 752–1226 (IPSVLDGFKP…SAKDLWNQDL (475 aa)). Y842 acts as the O-(5'-phospho-DNA)-tyrosine intermediate in catalysis. The interval 1024–1033 (KLVSSLSLAN) is interaction with DNA. 2 disordered regions span residues 1122–1155 (DGKP…DVGN) and 1244–1461 (RESL…IVDE). A compositionally biased stretch (acidic residues) spans 1133–1153 (LTGDDADEEEETQEQEGDEDV). Positions 1251–1261 (GKKKSTKRRAK) are enriched in basic residues. Basic and acidic residues-rich tracts occupy residues 1274–1283 (VKVEPKEKKS) and 1406–1417 (DKPEPKERRTRE). Positions 1434 to 1461 (DSDDEDEDEEDDIVMSDGDDDDDFIVDE) are enriched in acidic residues.

It belongs to the type II topoisomerase family. As to quaternary structure, homodimer. Mg(2+) serves as cofactor. Mn(2+) is required as a cofactor. Requires Ca(2+) as cofactor.

It localises to the nucleus. The enzyme catalyses ATP-dependent breakage, passage and rejoining of double-stranded DNA.. Functionally, control of topological states of DNA by transient breakage and subsequent rejoining of DNA strands. Topoisomerase II makes double-strand breaks. This Candida albicans (Yeast) protein is DNA topoisomerase 2 (TOP2).